Here is a 571-residue protein sequence, read N- to C-terminus: Serine/threonine-protein kinase Nek7 (571 aa).

Positions 19-277 (YHVVEQVRRG…LRNPSLQPYL (259 aa)) constitute a Protein kinase domain. ATP-binding positions include 25–33 (VRRGKSSSD) and Lys48. The active-site Proton acceptor is Asp144. 2 disordered regions span residues 298–321 (SPKDKARRNSLPGKFGKERVSREK) and 338–363 (TETGSSSSSQPASSTNGAEDKLETKR). Basic and acidic residues predominate over residues 312–321 (FGKERVSREK). Residues 342–351 (SSSSSQPASS) show a composition bias toward low complexity.

This sequence belongs to the protein kinase superfamily. NEK Ser/Thr protein kinase family. NIMA subfamily.

It catalyses the reaction L-seryl-[protein] + ATP = O-phospho-L-seryl-[protein] + ADP + H(+). The catalysed reaction is L-threonyl-[protein] + ATP = O-phospho-L-threonyl-[protein] + ADP + H(+). Its function is as follows. May be involved in plant development processes. The protein is Serine/threonine-protein kinase Nek7 (NEK7) of Arabidopsis thaliana (Mouse-ear cress).